A 489-amino-acid polypeptide reads, in one-letter code: MDLLIILGICLSCVVLLSLWKKTHGKGKLPPGPTPLPVVGNLLQLETKDINKSLSMLAKEYGSIFTLYFGMKPAVVLYGYEGVIEALIDRGEEFSGRGIFPVFDRVTKGLGIVFSSGEKWKETRRFSLTVLRNLGMGKKTIEERIQEEALCLIQALRKTNASPCDPTFLLFCVPCNVICSVIFQNRFDYDDEKFKTLIKYFHENFELLGTPWIQLYNIFPILHYLPGSHRQLFKNIDGQIKFILEKVQEHQESLDSNNPRDFVDHFLIKMEKEKHKKQSEFTMDNLITTIWDVFSAGTDTTSNTLKFALLLLLKHPEITAKVQEEIEHVIGRHRSPCMQDRTRMPYTDAVMHEIQRYVDLVPTSLPHAVTQDIEFNGYLIPKGTDIIPSLTSVLYDDKEFPNPEKFDPGHFLDESGNFKKSDYFMPFSAGKRACVGEGLARMELFLLLTTILQHFTLKPLVDPKDIDPTPVENGFVSVPPSYELCFVPV.

Residue Cys-434 coordinates heme.

This sequence belongs to the cytochrome P450 family. The cofactor is heme.

Its subcellular location is the endoplasmic reticulum membrane. It localises to the microsome membrane. The enzyme catalyses an organic molecule + reduced [NADPH--hemoprotein reductase] + O2 = an alcohol + oxidized [NADPH--hemoprotein reductase] + H2O + H(+). Cytochromes P450 are a group of heme-thiolate monooxygenases. In liver microsomes, this enzyme is involved in an NADPH-dependent electron transport pathway. It oxidizes a variety of structurally unrelated compounds, including steroids, fatty acids, and xenobiotics. The chain is Cytochrome P450 2C3 (CYP2C3) from Oryctolagus cuniculus (Rabbit).